The chain runs to 262 residues: Hydroxyethylthiazole kinase (262 aa).

Substrate is bound at residue methionine 50. 2 residues coordinate ATP: arginine 125 and threonine 171. Residue glycine 198 participates in substrate binding.

The protein belongs to the Thz kinase family. The cofactor is Mg(2+).

It catalyses the reaction 5-(2-hydroxyethyl)-4-methylthiazole + ATP = 4-methyl-5-(2-phosphooxyethyl)-thiazole + ADP + H(+). It participates in cofactor biosynthesis; thiamine diphosphate biosynthesis; 4-methyl-5-(2-phosphoethyl)-thiazole from 5-(2-hydroxyethyl)-4-methylthiazole: step 1/1. Catalyzes the phosphorylation of the hydroxyl group of 4-methyl-5-beta-hydroxyethylthiazole (THZ). This Shigella boydii serotype 4 (strain Sb227) protein is Hydroxyethylthiazole kinase.